The following is a 495-amino-acid chain: Glycerol kinase (495 aa).

Thr-11 lines the ADP pocket. ATP contacts are provided by Thr-11, Thr-12, and Ser-13. Residue Thr-11 coordinates sn-glycerol 3-phosphate. Arg-15 contacts ADP. Residues Arg-81, Glu-82, Tyr-133, and Asp-242 each contribute to the sn-glycerol 3-phosphate site. Glycerol-binding residues include Arg-81, Glu-82, Tyr-133, Asp-242, and Gln-243. ADP is bound by residues Thr-264 and Gly-307. Positions 264, 307, 311, and 408 each coordinate ATP. The ADP site is built by Gly-408 and Asn-412.

Belongs to the FGGY kinase family.

It catalyses the reaction glycerol + ATP = sn-glycerol 3-phosphate + ADP + H(+). It functions in the pathway polyol metabolism; glycerol degradation via glycerol kinase pathway; sn-glycerol 3-phosphate from glycerol: step 1/1. Its activity is regulated as follows. Inhibited by fructose 1,6-bisphosphate (FBP). In terms of biological role, key enzyme in the regulation of glycerol uptake and metabolism. Catalyzes the phosphorylation of glycerol to yield sn-glycerol 3-phosphate. The sequence is that of Glycerol kinase from Citrifermentans bemidjiense (strain ATCC BAA-1014 / DSM 16622 / JCM 12645 / Bem) (Geobacter bemidjiensis).